The sequence spans 469 residues: 3-isopropylmalate dehydratase large subunit (469 aa).

[4Fe-4S] cluster-binding residues include C349, C409, and C412.

The protein belongs to the aconitase/IPM isomerase family. LeuC type 1 subfamily. In terms of assembly, heterodimer of LeuC and LeuD. It depends on [4Fe-4S] cluster as a cofactor.

It catalyses the reaction (2R,3S)-3-isopropylmalate = (2S)-2-isopropylmalate. Its pathway is amino-acid biosynthesis; L-leucine biosynthesis; L-leucine from 3-methyl-2-oxobutanoate: step 2/4. Its function is as follows. Catalyzes the isomerization between 2-isopropylmalate and 3-isopropylmalate, via the formation of 2-isopropylmaleate. The chain is 3-isopropylmalate dehydratase large subunit from Methylorubrum extorquens (strain CM4 / NCIMB 13688) (Methylobacterium extorquens).